Consider the following 338-residue polypeptide: Thiosulfate-binding protein (338 aa).

The signal sequence occupies residues 1–25; that stretch reads MAVNLLKKNSLALVASLLLAGHVQA.

Belongs to the prokaryotic sulfate-binding protein family. As to quaternary structure, the complex is composed of two ATP-binding proteins (CysA), two transmembrane proteins (CysT and CysW) and a solute-binding protein (CysP).

The protein localises to the periplasm. Its function is as follows. Part of the ABC transporter complex CysAWTP (TC 3.A.1.6.1) involved in sulfate/thiosulfate import. This protein specifically binds thiosulfate and is involved in its transmembrane transport. The polypeptide is Thiosulfate-binding protein (cysP) (Escherichia coli (strain K12)).